Here is a 359-residue protein sequence, read N- to C-terminus: WW domain-binding protein wbp-11 (359 aa).

3 disordered regions span residues Met1–Gln38, Pro235–Gly264, and Pro317–Ala341. Residues Lys8–Lys27 are compositionally biased toward basic and acidic residues. The span at Met245–Ala256 shows a compositional bias: basic residues.

In terms of biological role, activates pre-mRNA splicing. May inhibit PP1 phosphatase activity. The protein is WW domain-binding protein wbp-11 of Caenorhabditis elegans.